A 294-amino-acid chain; its full sequence is Transcription termination/antitermination protein NusG (294 aa).

The segment at 1–91 is disordered; sequence MSDPNLNDAV…EEAEPAAPVD (91 aa). The span at 25–39 shows a compositional bias: acidic residues; that stretch reads DIVEAADSVDPDQAE. Over residues 40–53 the composition is skewed to low complexity; it reads AADLAAGEPAERAA. Residues 59–85 are compositionally biased toward acidic residues; the sequence is DDSDEDDAAAEEAVEADDESADEEEAE.

Belongs to the NusG family.

Participates in transcription elongation, termination and antitermination. This is Transcription termination/antitermination protein NusG from Streptomyces griseus.